Reading from the N-terminus, the 89-residue chain is Small ribosomal subunit protein uS14 (89 aa).

Belongs to the universal ribosomal protein uS14 family. Part of the 30S ribosomal subunit. Contacts proteins S3 and S10.

In terms of biological role, binds 16S rRNA, required for the assembly of 30S particles and may also be responsible for determining the conformation of the 16S rRNA at the A site. The chain is Small ribosomal subunit protein uS14 from Flavobacterium johnsoniae (strain ATCC 17061 / DSM 2064 / JCM 8514 / BCRC 14874 / CCUG 350202 / NBRC 14942 / NCIMB 11054 / UW101) (Cytophaga johnsonae).